The chain runs to 283 residues: DegV domain-containing protein CPE0304 (283 aa).

The 279-residue stretch at 3 to 281 (VKVITDSTSC…VKSVGIAYAR (279 aa)) folds into the DegV domain. Residues Ser-60 and Ser-92 each contribute to the hexadecanoate site.

In terms of biological role, may bind long-chain fatty acids, such as palmitate, and may play a role in lipid transport or fatty acid metabolism. This chain is DegV domain-containing protein CPE0304, found in Clostridium perfringens (strain 13 / Type A).